A 153-amino-acid chain; its full sequence is 1,4-dihydroxy-2-naphthoyl-CoA hydrolase (153 aa).

The active site involves Asp21.

The protein belongs to the 4-hydroxybenzoyl-CoA thioesterase family. DHNA-CoA hydrolase subfamily.

The catalysed reaction is 1,4-dihydroxy-2-naphthoyl-CoA + H2O = 1,4-dihydroxy-2-naphthoate + CoA + H(+). It functions in the pathway cofactor biosynthesis; phylloquinone biosynthesis. Its pathway is quinol/quinone metabolism; 1,4-dihydroxy-2-naphthoate biosynthesis; 1,4-dihydroxy-2-naphthoate from chorismate: step 7/7. Functionally, catalyzes the hydrolysis of 1,4-dihydroxy-2-naphthoyl-CoA (DHNA-CoA) to 1,4-dihydroxy-2-naphthoate (DHNA), a reaction involved in phylloquinone (vitamin K1) biosynthesis. The polypeptide is 1,4-dihydroxy-2-naphthoyl-CoA hydrolase (Synechococcus sp. (strain WH7803)).